The sequence spans 148 residues: MFRTMMKSKIHRATVTHADLHYVGSVTVDQDLMDAADLLEGEQVCIVDIDNGARLETYVIAGERGSGVIGINGAAAHLVKPGDLVILIAYGVMNEQEVRDYEPRVVFVDAANSPIELGADPAHAPEGSGLITPRMLSTLDAERESSLV.

Catalysis depends on serine 25, which acts as the Schiff-base intermediate with substrate; via pyruvic acid. The residue at position 25 (serine 25) is a Pyruvic acid (Ser). Residue threonine 57 coordinates substrate. Tyrosine 58 acts as the Proton donor in catalysis. 73–75 (GAA) lines the substrate pocket.

Belongs to the PanD family. As to quaternary structure, heterooctamer of four alpha and four beta subunits. Requires pyruvate as cofactor. In terms of processing, is synthesized initially as an inactive proenzyme, which is activated by self-cleavage at a specific serine bond to produce a beta-subunit with a hydroxyl group at its C-terminus and an alpha-subunit with a pyruvoyl group at its N-terminus.

The protein resides in the cytoplasm. The catalysed reaction is L-aspartate + H(+) = beta-alanine + CO2. It participates in cofactor biosynthesis; (R)-pantothenate biosynthesis; beta-alanine from L-aspartate: step 1/1. Catalyzes the pyruvoyl-dependent decarboxylation of aspartate to produce beta-alanine. The sequence is that of Aspartate 1-decarboxylase from Rhodococcus jostii (strain RHA1).